The primary structure comprises 139 residues: NADPH-dependent 7-cyano-7-deazaguanine reductase (139 aa).

Residue Cys-34 is the Thioimide intermediate of the active site. Catalysis depends on Asp-41, which acts as the Proton donor. Residues 56 to 58 (VEL) and 75 to 76 (HE) each bind substrate.

It belongs to the GTP cyclohydrolase I family. QueF type 1 subfamily.

It is found in the cytoplasm. The catalysed reaction is 7-aminomethyl-7-carbaguanine + 2 NADP(+) = 7-cyano-7-deazaguanine + 2 NADPH + 3 H(+). It functions in the pathway tRNA modification; tRNA-queuosine biosynthesis. Catalyzes the NADPH-dependent reduction of 7-cyano-7-deazaguanine (preQ0) to 7-aminomethyl-7-deazaguanine (preQ1). In Methylobacillus flagellatus (strain ATCC 51484 / DSM 6875 / VKM B-1610 / KT), this protein is NADPH-dependent 7-cyano-7-deazaguanine reductase.